The primary structure comprises 174 residues: Inactive signal peptidase IA (174 aa).

The Cytoplasmic segment spans residues 1–7; that stretch reads MKKVVKY. Residues 8–28 traverse the membrane as a helical segment; sequence LISLILAIIIVLFVQTFVIVG. Over 29–174 the chain is Extracellular; that stretch reads HVIPNNDMSP…FSKWTVQFKS (146 aa).

It belongs to the peptidase S26 family.

Its subcellular location is the cell membrane. In terms of biological role, catalytically inactive. The polypeptide is Inactive signal peptidase IA (spsA) (Staphylococcus aureus (strain COL)).